Here is a 251-residue protein sequence, read N- to C-terminus: Protection of telomeres homolog 2 (251 aa).

Residues 221-251 are disordered; sequence ELDNWPEGPPKTFAEAIARANNSRRPRDPPQ.

The protein belongs to the telombin family.

Its subcellular location is the nucleus. It localises to the chromosome. It is found in the telomere. In terms of biological role, telomeric DNA-binding protein, which binds to two or more single-stranded G-rich repeat sequences (G-strand), with high specificity to the 5'-TTAGGC-3' sequence. In addition, repeat sequence binding requires a 3' single-stranded telomeric overhang. Acts redundantly with pot-1 to negatively regulate telomerase-mediated telomere extension. Also regulates telomere length by the telomerase-independent telomere maintenance pathway called ALT (alternative lengthening of telomeres). Does not appear to have a role in anchoring telomeres to the nuclear envelope. The protein is Protection of telomeres homolog 2 of Caenorhabditis elegans.